The following is a 558-amino-acid chain: 2-isopropylmalate synthase (558 aa).

Residues 28–304 enclose the Pyruvate carboxyltransferase domain; that stretch reads PIWCSVDLRD…DPELEFSNLN (277 aa). Mg(2+) contacts are provided by D37, H243, H245, and N279. The segment at 438-558 is regulatory domain; the sequence is NRSPYYLKNY…VSALNRSKLK (121 aa).

This sequence belongs to the alpha-IPM synthase/homocitrate synthase family. LeuA type 2 subfamily. As to quaternary structure, homodimer. The cofactor is Mg(2+).

The protein resides in the cytoplasm. The enzyme catalyses 3-methyl-2-oxobutanoate + acetyl-CoA + H2O = (2S)-2-isopropylmalate + CoA + H(+). Its pathway is amino-acid biosynthesis; L-leucine biosynthesis; L-leucine from 3-methyl-2-oxobutanoate: step 1/4. Catalyzes the condensation of the acetyl group of acetyl-CoA with 3-methyl-2-oxobutanoate (2-ketoisovalerate) to form 3-carboxy-3-hydroxy-4-methylpentanoate (2-isopropylmalate). The protein is 2-isopropylmalate synthase of Clostridium acetobutylicum (strain ATCC 824 / DSM 792 / JCM 1419 / IAM 19013 / LMG 5710 / NBRC 13948 / NRRL B-527 / VKM B-1787 / 2291 / W).